The primary structure comprises 368 residues: 4-hydroxy-3-methylbut-2-en-1-yl diphosphate synthase (flavodoxin) (368 aa).

[4Fe-4S] cluster contacts are provided by Cys271, Cys274, Cys306, and Glu313.

This sequence belongs to the IspG family. The cofactor is [4Fe-4S] cluster.

The enzyme catalyses (2E)-4-hydroxy-3-methylbut-2-enyl diphosphate + oxidized [flavodoxin] + H2O + 2 H(+) = 2-C-methyl-D-erythritol 2,4-cyclic diphosphate + reduced [flavodoxin]. The protein operates within isoprenoid biosynthesis; isopentenyl diphosphate biosynthesis via DXP pathway; isopentenyl diphosphate from 1-deoxy-D-xylulose 5-phosphate: step 5/6. Its function is as follows. Converts 2C-methyl-D-erythritol 2,4-cyclodiphosphate (ME-2,4cPP) into 1-hydroxy-2-methyl-2-(E)-butenyl 4-diphosphate. The chain is 4-hydroxy-3-methylbut-2-en-1-yl diphosphate synthase (flavodoxin) from Histophilus somni (strain 129Pt) (Haemophilus somnus).